We begin with the raw amino-acid sequence, 346 residues long: tRNA N6-adenosine threonylcarbamoyltransferase (346 aa).

Positions 111 and 115 each coordinate Fe cation. Residues 134-138 (LVSGG), D167, G180, and N279 contribute to the substrate site. D307 contacts Fe cation.

This sequence belongs to the KAE1 / TsaD family. The cofactor is Fe(2+).

The protein resides in the cytoplasm. The enzyme catalyses L-threonylcarbamoyladenylate + adenosine(37) in tRNA = N(6)-L-threonylcarbamoyladenosine(37) in tRNA + AMP + H(+). Functionally, required for the formation of a threonylcarbamoyl group on adenosine at position 37 (t(6)A37) in tRNAs that read codons beginning with adenine. Is involved in the transfer of the threonylcarbamoyl moiety of threonylcarbamoyl-AMP (TC-AMP) to the N6 group of A37, together with TsaE and TsaB. TsaD likely plays a direct catalytic role in this reaction. The chain is tRNA N6-adenosine threonylcarbamoyltransferase from Burkholderia ambifaria (strain ATCC BAA-244 / DSM 16087 / CCUG 44356 / LMG 19182 / AMMD) (Burkholderia cepacia (strain AMMD)).